Consider the following 151-residue polypeptide: Meiotically up-regulated gene 114 protein (151 aa).

It localises to the cytoplasm. In terms of biological role, has a role in meiosis. The sequence is that of Meiotically up-regulated gene 114 protein (mug114) from Schizosaccharomyces pombe (strain 972 / ATCC 24843) (Fission yeast).